Here is a 44-residue protein sequence, read N- to C-terminus: Large ribosomal subunit protein bL36 (44 aa).

It belongs to the bacterial ribosomal protein bL36 family.

The protein is Large ribosomal subunit protein bL36 of Pseudoalteromonas translucida (strain TAC 125).